Consider the following 490-residue polypeptide: NADP-reducing hydrogenase subunit HndC (490 aa).

2 consecutive 4Fe-4S ferredoxin-type domains span residues 433-462 (LTYTIDPAKCTGCGLCTRVCPVECISGTKK) and 463-490 (QPHTIDTTRCIKCGACYDKCKFDSIIKQ).

Belongs to the complex I 51 kDa subunit family. In terms of assembly, heterotetramer composed of HndA, HndB, HndC and HndD subunits. HndC is probably the reducing subunit.

The enzyme catalyses H2 + NADP(+) = NADPH + H(+). With respect to regulation, inhibited by oxygen. Its function is as follows. Catalyzes the reduction of NADP in the presence of molecular H2 to yield NADPH. The protein is NADP-reducing hydrogenase subunit HndC (hndC) of Solidesulfovibrio fructosivorans (Desulfovibrio fructosivorans).